The chain runs to 132 residues: UPF0102 protein LI0223 (132 aa).

It belongs to the UPF0102 family.

This is UPF0102 protein LI0223 from Lawsonia intracellularis (strain PHE/MN1-00).